The chain runs to 293 residues: Bifunctional protein FolD 1 (293 aa).

NADP(+) is bound by residues 174 to 176 and Thr240; that span reads GRS.

The protein belongs to the tetrahydrofolate dehydrogenase/cyclohydrolase family. Homodimer.

The catalysed reaction is (6R)-5,10-methylene-5,6,7,8-tetrahydrofolate + NADP(+) = (6R)-5,10-methenyltetrahydrofolate + NADPH. The enzyme catalyses (6R)-5,10-methenyltetrahydrofolate + H2O = (6R)-10-formyltetrahydrofolate + H(+). The protein operates within one-carbon metabolism; tetrahydrofolate interconversion. Its function is as follows. Catalyzes the oxidation of 5,10-methylenetetrahydrofolate to 5,10-methenyltetrahydrofolate and then the hydrolysis of 5,10-methenyltetrahydrofolate to 10-formyltetrahydrofolate. The sequence is that of Bifunctional protein FolD 1 from Saccharopolyspora erythraea (strain ATCC 11635 / DSM 40517 / JCM 4748 / NBRC 13426 / NCIMB 8594 / NRRL 2338).